We begin with the raw amino-acid sequence, 352 residues long: MNTLLMHCRPGFEGEVCAEIAEHAATLEIPGYAKSKPASAHVEFVCQDADGAERLMRRLRFADLIFPRQWARGPGFIELPESQRIEVLLAELASYPVCGSLWLEVLDTNAGKEVSTFCRKFEKPLRAALVKAGRLQEDPALPRLLLTFRSGREVFVGLAEPRNSALWPMGIPRLKFPREAPSRSTLKLEEAWHQFIPRSEWDKRLAPDMLAVDLGAAPGGWTWQLVNREMRVTAVDNGPMAENLMYSGLVDHQKVDGYQYRPRQRVDWMVCDIVEKPARTGALIETWIGEGLCREAVVNLKLPMKQRYAEVRKILQRLRESFDARGLKVAIGCKQLYHDREEVTCHLRRLER.

Residues serine 184, 217–220 (APGG), aspartate 236, aspartate 256, and aspartate 272 contribute to the S-adenosyl-L-methionine site. Lysine 301 acts as the Proton acceptor in catalysis.

This sequence belongs to the class I-like SAM-binding methyltransferase superfamily. RNA methyltransferase RlmE family. RlmM subfamily. As to quaternary structure, monomer.

It is found in the cytoplasm. The enzyme catalyses cytidine(2498) in 23S rRNA + S-adenosyl-L-methionine = 2'-O-methylcytidine(2498) in 23S rRNA + S-adenosyl-L-homocysteine + H(+). Its function is as follows. Catalyzes the 2'-O-methylation at nucleotide C2498 in 23S rRNA. This is Ribosomal RNA large subunit methyltransferase M from Pseudomonas aeruginosa (strain LESB58).